The chain runs to 299 residues: Ribonuclease Z (299 aa).

Residues His-60, His-62, Asp-64, His-65, His-137, Asp-207, and His-265 each coordinate Zn(2+). Asp-64 (proton acceptor) is an active-site residue.

Belongs to the RNase Z family. As to quaternary structure, homodimer. Zn(2+) is required as a cofactor.

It catalyses the reaction Endonucleolytic cleavage of RNA, removing extra 3' nucleotides from tRNA precursor, generating 3' termini of tRNAs. A 3'-hydroxy group is left at the tRNA terminus and a 5'-phosphoryl group is left at the trailer molecule.. Functionally, zinc phosphodiesterase, which displays some tRNA 3'-processing endonuclease activity. Probably involved in tRNA maturation, by removing a 3'-trailer from precursor tRNA. The protein is Ribonuclease Z of Nitrosopumilus maritimus (strain SCM1).